Here is a 208-residue protein sequence, read N- to C-terminus: 3-demethoxyubiquinol 3-hydroxylase (208 aa).

Fe cation contacts are provided by Glu-57, Glu-87, His-90, Glu-139, Glu-171, and His-174.

This sequence belongs to the COQ7 family. The cofactor is Fe cation.

Its subcellular location is the cell membrane. The enzyme catalyses a 5-methoxy-2-methyl-3-(all-trans-polyprenyl)benzene-1,4-diol + AH2 + O2 = a 3-demethylubiquinol + A + H2O. It functions in the pathway cofactor biosynthesis; ubiquinone biosynthesis. Its function is as follows. Catalyzes the hydroxylation of 2-nonaprenyl-3-methyl-6-methoxy-1,4-benzoquinol during ubiquinone biosynthesis. In Burkholderia cenocepacia (strain ATCC BAA-245 / DSM 16553 / LMG 16656 / NCTC 13227 / J2315 / CF5610) (Burkholderia cepacia (strain J2315)), this protein is 3-demethoxyubiquinol 3-hydroxylase.